The following is a 59-amino-acid chain: Large ribosomal subunit protein uL30 (59 aa).

The protein belongs to the universal ribosomal protein uL30 family. Part of the 50S ribosomal subunit.

This chain is Large ribosomal subunit protein uL30, found in Aeromonas hydrophila subsp. hydrophila (strain ATCC 7966 / DSM 30187 / BCRC 13018 / CCUG 14551 / JCM 1027 / KCTC 2358 / NCIMB 9240 / NCTC 8049).